A 38-amino-acid polypeptide reads, in one-letter code: DNA binding protein ORF8 (38 aa).

The protein belongs to the microviridae J protein family.

Its subcellular location is the virion. It localises to the host cytoplasm. Its function is as follows. Mediates ssDNA packaging into virion, it locates to the internal surface of the capsid, thereby displacing the internal scaffolding protein during virion formation. Additionally, protein ORF8 plays a role in viral attachment to the host cell. The polypeptide is DNA binding protein ORF8 (Spiroplasma melliferum (SpV4)).